The sequence spans 289 residues: Transmembrane protein 163 (289 aa).

The segment at 1 to 65 (MEPAAGIQRR…ESGQFSDGLE (65 aa)) is disordered. Topologically, residues 1–88 (MEPAAGIQRR…HEAQNYRKKA (88 aa)) are cytoplasmic. Serine 11 carries the phosphoserine modification. Residues 16–36 (TVPPPPRGHAPPAAAPGPAPL) are compositionally biased toward pro residues. Positions 42–72 (EPPQLEEERQVRISESGQFSDGLEDRGLLES) are required for interaction with MCOLN1. Residues serine 55, serine 57, and serine 61 each carry the phosphoserine modification. A helical membrane pass occupies residues 89–109 (LWVSWFSIIVTLALAVAAFTV). Over 110–116 (SVMRYSA) the chain is Extracellular. The chain crosses the membrane as a helical span at residues 117 to 137 (SAFGFAFDAILDVLSSAIVLW). Residues 138–150 (RYSNAAAVHSAHR) are Cytoplasmic-facing. The chain crosses the membrane as a helical span at residues 151–171 (EYIACVILGVIFLLSSICIVV). Topologically, residues 172-187 (KAIHDLSTRLLPEVDD) are extracellular. Residues 188–208 (FLFSVSILSGILCSILAVLKF) form a helical membrane-spanning segment. The Cytoplasmic segment spans residues 209–217 (MLGKVLTSR). The chain crosses the membrane as a helical span at residues 218–238 (ALITDGFNSLVGGVMGFSILL). Residues 239-255 (SAEVFKHDSAVWYLDGS) lie on the Extracellular side of the membrane. Residues 256-276 (IGVLIGLTIFAYGVKLLIDMV) form a helical membrane-spanning segment. Topologically, residues 277–289 (PRVRQTRHYEMFE) are cytoplasmic.

This sequence belongs to the TMEM163 family. As to quaternary structure, homodimer. Interacts with MCOLN1/TRPML1. Interacts with SLC30A1, SLC30A2, SLC30A3 and SLC30A4. In terms of tissue distribution, widely expressed. High expression is detected in brain, lung and testis.

Its subcellular location is the cytoplasmic vesicle. It localises to the secretory vesicle. The protein resides in the synaptic vesicle membrane. It is found in the early endosome membrane. The protein localises to the late endosome membrane. Its subcellular location is the lysosome membrane. It localises to the cell membrane. It carries out the reaction Zn(2+)(in) = Zn(2+)(out). Zinc ion transporter that mediates zinc efflux and plays a crucial role in intracellular zinc homeostasis. Binds the divalent cations Zn(2+), Ni(2+), and to a minor extent Cu(2+). Is a functional modulator of P2X purinoceptors, including P2RX1, P2RX3, P2RX4 and P2RX7. Plays a role in central nervous system development and is required for myelination, and survival and proliferation of oligodendrocytes. The polypeptide is Transmembrane protein 163 (TMEM163) (Homo sapiens (Human)).